We begin with the raw amino-acid sequence, 820 residues long: Penicillin-binding protein 1A (820 aa).

Positions 1-120 are disordered; it reads MNSDGRHHQS…PAGRLPQPRV (120 aa). Residues 41-53 are compositionally biased toward basic and acidic residues; it reads TDDRSAPHADSIE. Residues 139–159 traverse the membrane as a helical segment; that stretch reads LTAAVVILLPMVTFTMAYLIV. The segment at 180 to 360 is transglycosylase; that stretch reads GSEIAKIVPP…RWNWVLDGMV (181 aa). The Proton donor; for transglycosylase activity role is filled by Glu-213. The interval 453–743 is transpeptidase; the sequence is AVVSIDPHNG…PSDIWKATMD (291 aa). Ser-487 acts as the Acyl-ester intermediate; for transpeptidase activity in catalysis. Over residues 792 to 804 the composition is skewed to low complexity; sequence ITIPIGPPTTITL. The tract at residues 792–820 is disordered; it reads ITIPIGPPTTITLAPPPPAPPAATPTPPP. The segment covering 805–820 has biased composition (pro residues); that stretch reads APPPPAPPAATPTPPP.

It in the N-terminal section; belongs to the glycosyltransferase 51 family. The protein in the C-terminal section; belongs to the transpeptidase family. Interacts with RipA via its transpeptidase domain (residues 561-820).

It is found in the cell membrane. It carries out the reaction [GlcNAc-(1-&gt;4)-Mur2Ac(oyl-L-Ala-gamma-D-Glu-L-Lys-D-Ala-D-Ala)](n)-di-trans,octa-cis-undecaprenyl diphosphate + beta-D-GlcNAc-(1-&gt;4)-Mur2Ac(oyl-L-Ala-gamma-D-Glu-L-Lys-D-Ala-D-Ala)-di-trans,octa-cis-undecaprenyl diphosphate = [GlcNAc-(1-&gt;4)-Mur2Ac(oyl-L-Ala-gamma-D-Glu-L-Lys-D-Ala-D-Ala)](n+1)-di-trans,octa-cis-undecaprenyl diphosphate + di-trans,octa-cis-undecaprenyl diphosphate + H(+). The catalysed reaction is Preferential cleavage: (Ac)2-L-Lys-D-Ala-|-D-Ala. Also transpeptidation of peptidyl-alanyl moieties that are N-acyl substituents of D-alanine.. It functions in the pathway cell wall biogenesis; peptidoglycan biosynthesis. Functionally, cell wall formation. Synthesis of cross-linked peptidoglycan from the lipid intermediates. The enzyme has a penicillin-insensitive transglycosylase N-terminal domain (formation of linear glycan strands) and a penicillin-sensitive transpeptidase C-terminal domain (cross-linking of the peptide subunits). Has little peptidoglycan hydrolytic activity; however it inhibits the synergistic peptidoglycan hydrolysis of RipA plus RpfB. In Mycobacterium tuberculosis (strain ATCC 25618 / H37Rv), this protein is Penicillin-binding protein 1A (ponA1).